A 321-amino-acid chain; its full sequence is Auxin-responsive protein IAA8 (321 aa).

Residues 54-58 (LRLGL) carry the EAR-like (transcriptional repression) motif. The PB1 domain occupies 199–301 (VLFVKVSMDG…TCQKLKIMKG (103 aa)).

This sequence belongs to the Aux/IAA family. As to quaternary structure, homodimers and heterodimers. Interacts with TPL. As to expression, highly expressed in the whole plant.

Its subcellular location is the nucleus. Its function is as follows. Aux/IAA proteins are short-lived transcriptional factors that function as repressors of early auxin response genes at low auxin concentrations. Repression is thought to result from the interaction with auxin response factors (ARFs), proteins that bind to the auxin-responsive promoter element (AuxRE). Formation of heterodimers with ARF proteins may alter their ability to modulate early auxin response genes expression. This chain is Auxin-responsive protein IAA8 (IAA8), found in Arabidopsis thaliana (Mouse-ear cress).